A 1487-amino-acid polypeptide reads, in one-letter code: Probable lysine-specific demethylase SE14 (1487 aa).

The disordered stretch occupies residues 1–23; the sequence is MPPQPPPAASASASAPDPAVPAW. The segment covering 9 to 22 has biased composition (low complexity); that stretch reads ASASASAPDPAVPA. Positions 30–71 constitute a JmjN domain; sequence APEYRPTESEFADPIAFLSRVEREAAAYGICKVIPPHPRPSR. Positions 86–104 are enriched in low complexity; sequence CDAPAPSPAAASDSSIPPS. The segment at 86–113 is disordered; it reads CDAPAPSPAAASDSSIPPSSSSPPPVSA. Residues 232-398 enclose the JmjC domain; the sequence is NSPWNLQAIA…FAKEAAVRRA (167 aa). Residues H275, E277, and H366 each contribute to the Fe cation site. Disordered regions lie at residues 494 to 555 and 684 to 718; these read SCSK…DDGD and YGDT…PDVE. Composition is skewed to basic and acidic residues over residues 498–507 and 542–551; these read APEKKGEDGP and QAPEGEKLDT. A C2H2-type 1; degenerate zinc finger spans residues 1377–1400; that stretch reads FQCDIEFCDMTFETKAELRAHQRN. 3 C2H2-type zinc fingers span residues 1400 to 1424, 1430 to 1454, and 1460 to 1486; these read NICT…QCVH, FKCP…IRVH, and YKCS…KFNH.

The cofactor is Fe(2+).

Its subcellular location is the nucleus. Histone demethylase that demethylates 'Lys-4' (H3K4me) of histone H3. Involved in the control of flowering time. Has a suppressive effect on floral transition under long day conditions through the demethylation of H3K4me3 in the promoter region of the flower-promoting signal HD3B/RFT1. This Oryza sativa subsp. japonica (Rice) protein is Probable lysine-specific demethylase SE14 (SE14).